A 955-amino-acid polypeptide reads, in one-letter code: MQSSLIKILGVLAIVATLVCFVFAALGMIGAVSVGNGCYMRYAPGGKGGSDSITSTITLNANANYVNTSTMLPDGTMQLTPDPAHYGEWLNTQVEVKDKQAVSLQVVGQISLCLAYVPKDNLQFTESTRPGKSNLDDNGKMIPIPRVTDVNKPPLSLIMDAKNNEWRNITEMYANDRILVSVTPNYSPGAGGTVGAMDAFKGTNVTADCSQGKTAYDPICGRYSIYSGPYVNACELKQNYWQGNKKQKCPNGCVWGTIDWCYTAPSAWCTYYYVCDSLSAWVNNYGTMPEPYKDDGTFTFSWASNSGGIFIDYANLQCSNNINIPPNGKCPDSVDDRSPKDKDYIGGAGCTSGVCNGGEFQSQRRFWYTSDGNGGKGPTGLIWQISNTSNVDSTLPSTLQFAQFVTASDQPTEYGNEYKVIYNIPFNSNTDKGYLQYRLWCPTSQDASKNTGGYVMNIKQTKCYRENGNSLTDVFNNRGQVQYLVVPSAENPNTSGKNYSPEAAIVDSKGKANFNAAGEGYIWMRVLNDPNDYKDSEGSYKVHFSTSQSVGSFTIKVMNPLLQLFKGKVKGAAESIFRNIVCYGGDTSSCTNFFNYIKALLILYVMVYGAMFLLGFAKINQKDLVVRIVKIGIVSGLMNGNTFEFFNNYLFDTIANFSDEIISNMSGYSLFNSNGTVSNPFMFLDAVMSRILFSQTFMAQLLALLSLGLSGIIYFIITVIAVMIVIITAFRAAAVYIMAFMATCILIGIAPIFISFLLFDFTRYLFDNWVRFTIRYMIEPVVLMAGIIVLTQLFTIYLDFVLGYSVCWKCALPIKIPFIGTILPVALLNVPIFCINWFAPWGMDYMSGMMGVNMQNIVALVIIAYGMYGYVEFSGNMVARLTSAAGPSATSMGGAMSGAAEQGALSQVGMDEKTRKGITGRAKERLKQRNETLKQAEKTRKNAPKEEPPKAEIPK.

Residues 1–24 (MQSSLIKILGVLAIVATLVCFVFA) form the signal peptide. Residues 127-146 (STRPGKSNLDDNGKMIPIPR) form a disordered region. 6 helical membrane-spanning segments follow: residues 597-617 (IKAL…LGFA), 707-727 (LGLS…IVII), 739-759 (AFMA…FLLF), 781-801 (VVLM…LDFV), 818-838 (FIGT…INWF), and 857-877 (IVAL…SGNM). A disordered region spans residues 905-955 (LSQVGMDEKTRKGITGRAKERLKQRNETLKQAEKTRKNAPKEEPPKAEIPK). Residues 910 to 955 (MDEKTRKGITGRAKERLKQRNETLKQAEKTRKNAPKEEPPKAEIPK) are compositionally biased toward basic and acidic residues.

It belongs to the TrbL/VirB6 family.

It localises to the cell membrane. This is an uncharacterized protein from Rickettsia bellii (strain RML369-C).